Consider the following 262-residue polypeptide: Rhomboid-type serine protease 2 (262 aa).

The Cytoplasmic portion of the chain corresponds to 1–16; sequence MNWKSYVFPGGHPPAA. The chain crosses the membrane as a helical span at residues 17-37; that stretch reads LTTGLVVFLTAIYLLSFIFAL. Over 38–57 the chain is Lumenal; the sequence is REDLSLAPESLFKLQMSRLS. The chain crosses the membrane as a helical span at residues 58–78; it reads LYPLIHLSLPHLLFNVLAIWA. At 79 to 89 the chain is on the cytoplasmic side; the sequence is PLNLFEETHGT. The chain crosses the membrane as a helical span at residues 90-110; the sequence is VYTGVFLNLSALFAGILYCLL. The Lumenal segment spans residues 111-112; sequence GK. The helical transmembrane segment at 113 to 133 threads the bilayer; it reads LLYPEALVAGASGWCFTLFAY. Ser124 (nucleophile) is an active-site residue. Topologically, residues 134–151 are cytoplasmic; it reads YSFKESQIRPRTRIFRTD. The chain crosses the membrane as a helical span at residues 152-168; sequence YSIPTLYTPLVLLVAIA. Residues 169-174 lie on the Lumenal side of the membrane; it reads VVIPGS. A helical membrane pass occupies residues 175 to 191; sequence SFWGHFFGLCVGYAIGY. Residue His179 is part of the active site. The Cytoplasmic segment spans residues 192–262; that stretch reads KESWFNKITP…DNSGTVLGTA (71 aa). The tract at residues 243-262 is disordered; the sequence is STETPLPLHNDNSGTVLGTA. Positions 252-262 are enriched in polar residues; the sequence is NDNSGTVLGTA.

Belongs to the peptidase S54 family. Interacts with SNX3.

The protein localises to the golgi apparatus membrane. The protein resides in the golgi apparatus. Its subcellular location is the cis-Golgi network membrane. It carries out the reaction Cleaves type-1 transmembrane domains using a catalytic dyad composed of serine and histidine that are contributed by different transmembrane domains.. In terms of biological role, probable rhomboid-type serine protease that catalyzes intramembrane proteolysis. The polypeptide is Rhomboid-type serine protease 2 (RBD2) (Saccharomyces cerevisiae (strain ATCC 204508 / S288c) (Baker's yeast)).